The sequence spans 577 residues: Aspartate--tRNA(Asp) ligase (577 aa).

Glu-172 lines the L-aspartate pocket. The interval Gln-196 to Lys-199 is aspartate. Position 218 (Arg-218) interacts with L-aspartate. ATP is bound by residues Arg-218 to Glu-220 and Gln-227. His-438 is a binding site for L-aspartate. Position 473 (Glu-473) interacts with ATP. Arg-480 is an L-aspartate binding site. Gly-525–Arg-528 contacts ATP.

Belongs to the class-II aminoacyl-tRNA synthetase family. Type 1 subfamily. As to quaternary structure, homodimer.

It is found in the cytoplasm. It carries out the reaction tRNA(Asp) + L-aspartate + ATP = L-aspartyl-tRNA(Asp) + AMP + diphosphate. Its function is as follows. Catalyzes the attachment of L-aspartate to tRNA(Asp) in a two-step reaction: L-aspartate is first activated by ATP to form Asp-AMP and then transferred to the acceptor end of tRNA(Asp). Is specific for tRNA(Asp) since it cannot aspartylate tRNA(Asn). The protein is Aspartate--tRNA(Asp) ligase (aspS1) of Deinococcus radiodurans (strain ATCC 13939 / DSM 20539 / JCM 16871 / CCUG 27074 / LMG 4051 / NBRC 15346 / NCIMB 9279 / VKM B-1422 / R1).